We begin with the raw amino-acid sequence, 306 residues long: Aspartate carbamoyltransferase catalytic subunit (306 aa).

Carbamoyl phosphate-binding residues include R55 and T56. Residue K85 coordinates L-aspartate. R106, H133, and Q136 together coordinate carbamoyl phosphate. R166 and R228 together coordinate L-aspartate. L264 and P265 together coordinate carbamoyl phosphate.

Belongs to the aspartate/ornithine carbamoyltransferase superfamily. ATCase family. Heterododecamer (2C3:3R2) of six catalytic PyrB chains organized as two trimers (C3), and six regulatory PyrI chains organized as three dimers (R2).

The catalysed reaction is carbamoyl phosphate + L-aspartate = N-carbamoyl-L-aspartate + phosphate + H(+). It functions in the pathway pyrimidine metabolism; UMP biosynthesis via de novo pathway; (S)-dihydroorotate from bicarbonate: step 2/3. Its function is as follows. Catalyzes the condensation of carbamoyl phosphate and aspartate to form carbamoyl aspartate and inorganic phosphate, the committed step in the de novo pyrimidine nucleotide biosynthesis pathway. The polypeptide is Aspartate carbamoyltransferase catalytic subunit (Serratia marcescens).